A 372-amino-acid polypeptide reads, in one-letter code: Spermidine/putrescine import ATP-binding protein PotA (372 aa).

The 231-residue stretch at 11–241 (IELRSIKKSY…PANLFVARFI (231 aa)) folds into the ABC transporter domain. 43–50 (GPSGCGKT) contacts ATP.

This sequence belongs to the ABC transporter superfamily. Spermidine/putrescine importer (TC 3.A.1.11.1) family. The complex is composed of two ATP-binding proteins (PotA), two transmembrane proteins (PotB and PotC) and a solute-binding protein (PotD).

It is found in the cell inner membrane. The enzyme catalyses ATP + H2O + polyamine-[polyamine-binding protein]Side 1 = ADP + phosphate + polyamineSide 2 + [polyamine-binding protein]Side 1.. In terms of biological role, part of the ABC transporter complex PotABCD involved in spermidine/putrescine import. Responsible for energy coupling to the transport system. The chain is Spermidine/putrescine import ATP-binding protein PotA from Haemophilus influenzae (strain 86-028NP).